The following is a 1885-amino-acid chain: Fatty acid synthase subunit alpha (1885 aa).

A compositionally biased stretch (basic and acidic residues) spans 92–107 (PDPADLAPKETPKQEE). The disordered stretch occupies residues 92–140 (PDPADLAPKETPKQEESTPSAPAAATPTPAAAAAPTPAPAPASAGPVES). The span at 108-126 (STPSAPAAATPTPAAAAAP) shows a compositional bias: low complexity. In terms of domain architecture, Carrier spans 146–221 (VKANLLIHVL…EQFQDSFSGQ (76 aa)). At Ser-181 the chain carries O-(pantetheine 4'-phosphoryl)serine. A Ketosynthase family 3 (KS3) domain is found at 1121 to 1661 (IQEIVVQHDL…QKGAQAVVVH (541 aa)). Active-site for beta-ketoacyl synthase activity residues include Cys-1304, His-1546, and His-1587. Asp-1771, Val-1772, and Glu-1773 together coordinate Mg(2+). Acetyl-CoA-binding positions include 1771–1773 (DVE), Tyr-1797, Ser-1807, 1816–1826 (EAVFKALGVES), 1840–1843 (RDVN), and 1870–1872 (ISH). Residues Ser-1871 and His-1872 each contribute to the Mg(2+) site.

It belongs to the thiolase-like superfamily. Fungal fatty acid synthetase subunit alpha family. In terms of assembly, [Alpha(6)beta(6)] hexamers of two multifunctional subunits (alpha and beta).

It catalyses the reaction acetyl-CoA + n malonyl-CoA + 2n NADPH + 4n H(+) = a long-chain-acyl-CoA + n CoA + n CO2 + 2n NADP(+).. The catalysed reaction is a fatty acyl-[ACP] + malonyl-[ACP] + H(+) = a 3-oxoacyl-[ACP] + holo-[ACP] + CO2. The enzyme catalyses a (3R)-hydroxyacyl-[ACP] + NADP(+) = a 3-oxoacyl-[ACP] + NADPH + H(+). Functionally, fatty acid synthetase catalyzes the formation of long-chain fatty acids from acetyl-CoA, malonyl-CoA and NADPH. The alpha subunit contains domains for: acyl carrier protein, 3-oxoacyl-[acyl-carrier-protein] reductase, and 3-oxoacyl-[acyl-carrier-protein] synthase. The chain is Fatty acid synthase subunit alpha (FAS2) from Candida albicans (Yeast).